We begin with the raw amino-acid sequence, 231 residues long: D-allulose-6-phosphate 3-epimerase (231 aa).

Position 6 (Ser6) interacts with substrate. 3 residues coordinate a divalent metal cation: His30, Asp32, and His63. Asp32 (proton acceptor) is an active-site residue. Substrate-binding positions include His63, 140 to 143 (GFAG), 173 to 175 (DGS), and 195 to 197 (GTS). Asp173 provides a ligand contact to a divalent metal cation. The active-site Proton donor is Asp173.

This sequence belongs to the ribulose-phosphate 3-epimerase family. AlsE subfamily. In terms of assembly, homohexamer. Trimer of dimers. The cofactor is Co(2+). It depends on Mn(2+) as a cofactor. Zn(2+) is required as a cofactor.

The enzyme catalyses D-allulose 6-phosphate = keto-D-fructose 6-phosphate. The protein operates within carbohydrate degradation; D-allose degradation. In terms of biological role, catalyzes the reversible epimerization of D-allulose 6-phosphate to D-fructose 6-phosphate. Can also catalyze with lower efficiency the reversible epimerization of D-ribulose 5-phosphate to D-xylulose 5-phosphate. The chain is D-allulose-6-phosphate 3-epimerase from Escherichia coli (strain K12).